The following is a 251-amino-acid chain: Probable transcriptional regulatory protein MLBr00475 (251 aa).

It belongs to the TACO1 family.

Its subcellular location is the cytoplasm. This is Probable transcriptional regulatory protein MLBr00475 from Mycobacterium leprae (strain Br4923).